A 76-amino-acid polypeptide reads, in one-letter code: MTLNEAIKDKVYEIVEIANCDEALKKRFLSFGIHEGVQCILLHYSMKKATLSVKINRIQVALRSHEAQYLVIKESV.

This sequence belongs to the FeoA family.

Might be involved in Fe(2+) ion uptake. The polypeptide is Putative Fe(2+) transport protein A (Helicobacter pylori (strain ATCC 700392 / 26695) (Campylobacter pylori)).